Here is a 59-residue protein sequence, read N- to C-terminus: Large ribosomal subunit protein uL30 (59 aa).

It belongs to the universal ribosomal protein uL30 family. In terms of assembly, part of the 50S ribosomal subunit.

This chain is Large ribosomal subunit protein uL30, found in Clostridium beijerinckii (strain ATCC 51743 / NCIMB 8052) (Clostridium acetobutylicum).